The primary structure comprises 349 residues: tRNA N6-adenosine threonylcarbamoyltransferase (349 aa).

Residues H118 and H122 each coordinate Fe cation. Substrate-binding positions include 141 to 145 (LVSGG), D174, G187, and N280. D308 is a Fe cation binding site.

It belongs to the KAE1 / TsaD family. The cofactor is Fe(2+).

Its subcellular location is the cytoplasm. It carries out the reaction L-threonylcarbamoyladenylate + adenosine(37) in tRNA = N(6)-L-threonylcarbamoyladenosine(37) in tRNA + AMP + H(+). In terms of biological role, required for the formation of a threonylcarbamoyl group on adenosine at position 37 (t(6)A37) in tRNAs that read codons beginning with adenine. Is involved in the transfer of the threonylcarbamoyl moiety of threonylcarbamoyl-AMP (TC-AMP) to the N6 group of A37, together with TsaE and TsaB. TsaD likely plays a direct catalytic role in this reaction. This is tRNA N6-adenosine threonylcarbamoyltransferase from Acidovorax sp. (strain JS42).